A 132-amino-acid chain; its full sequence is Small ribosomal subunit protein uS11 (132 aa).

A disordered region spans residues 1–24 (MAAQKQAARKPRRRDRKSVPVGQA). A compositionally biased stretch (basic residues) spans 7–16 (AARKPRRRDR).

It belongs to the universal ribosomal protein uS11 family. As to quaternary structure, part of the 30S ribosomal subunit. Interacts with proteins S7 and S18. Binds to IF-3.

Its function is as follows. Located on the platform of the 30S subunit, it bridges several disparate RNA helices of the 16S rRNA. Forms part of the Shine-Dalgarno cleft in the 70S ribosome. This chain is Small ribosomal subunit protein uS11, found in Bifidobacterium adolescentis (strain ATCC 15703 / DSM 20083 / NCTC 11814 / E194a).